Reading from the N-terminus, the 498-residue chain is Angiopoietin-1 (498 aa).

Residues 1-19 form the signal peptide; sequence MTVFLSFAFLAAILTHIGC. N92, N122, N154, N243, and N295 each carry an N-linked (GlcNAc...) asparagine glycan. Positions 158 to 254 form a coiled coil; the sequence is RLEIQLLENS…SVLQKQQLEL (97 aa). In terms of domain architecture, Fibrinogen C-terminal spans 277-497; sequence KEEVKPFRDC…STTMMIRPLD (221 aa). 2 cysteine pairs are disulfide-bonded: C286–C315 and C439–C452.

Homooligomer. Interacts with TEK/TIE2. Interacts with SVEP1/polydom. Interacts with THBD; this interaction significantly inhibits the generation of activated PC and TAFIa/CPB2 by the thrombin/thrombomodulin complex.

It localises to the secreted. Functionally, binds and activates TIE2 receptor by inducing its tyrosine phosphorylation. Implicated in endothelial developmental processes later and distinct from that of VEGF. Appears to play a crucial role in mediating reciprocal interactions between the endothelium and surrounding matrix and mesenchyme. Mediates blood vessel maturation/stability. It may play an important role in the heart early development. This chain is Angiopoietin-1 (ANGPT1), found in Sus scrofa (Pig).